We begin with the raw amino-acid sequence, 830 residues long: Probable glucan 1,3-beta-glucosidase D (830 aa).

Basic and acidic residues-rich tracts occupy residues 1 to 11 (MPGHSRSRDRL) and 74 to 84 (VHEHDHDHEYD). Disordered regions lie at residues 1 to 91 (MPGH…EEPW), 127 to 163 (MSGA…QRRK), and 260 to 297 (GGPG…STSA). The Cytoplasmic segment spans residues 1–307 (MPGHSRSRDR…RPSFWKRYHK (307 aa)). Residues 147–163 (GKGKKRLDRETRRQRRK) are compositionally biased toward basic residues. The chain crosses the membrane as a helical; Signal-anchor for type II membrane protein span at residues 308–328 (TFIFFAILIVLAAIAIPVGII). Over 329–830 (EARRLHGTSG…PSFGNLPEYY (502 aa)) the chain is Extracellular. Residues asparagine 341, asparagine 376, asparagine 381, asparagine 393, asparagine 397, asparagine 546, and asparagine 558 are each glycosylated (N-linked (GlcNAc...) asparagine). Glutamate 597 (proton donor) is an active-site residue. N-linked (GlcNAc...) asparagine glycosylation is found at asparagine 610, asparagine 669, and asparagine 689. The active-site Nucleophile is the glutamate 702.

This sequence belongs to the glycosyl hydrolase 5 (cellulase A) family.

It is found in the cell membrane. The catalysed reaction is Successive hydrolysis of beta-D-glucose units from the non-reducing ends of (1-&gt;3)-beta-D-glucans, releasing alpha-glucose.. Glucosidase involved in the degradation of cellulosic biomass. Active on lichenan. The sequence is that of Probable glucan 1,3-beta-glucosidase D (exgD) from Aspergillus niger (strain ATCC MYA-4892 / CBS 513.88 / FGSC A1513).